The sequence spans 131 residues: UPF0382 inner membrane protein YgdD (131 aa).

Residues 1-4 (MTSR) lie on the Periplasmic side of the membrane. The helical transmembrane segment at 5–25 (FMLIFAAISGFIFVALGAFGA) threads the bilayer. The Cytoplasmic portion of the chain corresponds to 26-64 (HVLSKTMGAVEMGWIQTGLEYQAFHTLAILGLAVAMQRR). A helical transmembrane segment spans residues 65-85 (ISIWFYWSSVFLALGTVLFSG). Residues 86 to 97 (SLYCLALSHLRL) are Periplasmic-facing. The chain crosses the membrane as a helical span at residues 98–118 (WAFVTPVGGVSFLAGWALMLV). Residues 119 to 131 (GAIRLKRKGVSHE) lie on the Cytoplasmic side of the membrane.

This sequence belongs to the UPF0382 family.

The protein resides in the cell inner membrane. The sequence is that of UPF0382 inner membrane protein YgdD (ygdD) from Escherichia coli O157:H7.